The sequence spans 636 residues: Putative ankyrin repeat protein L766 (636 aa).

ANK repeat units follow at residues 63–97, 99–129, 130–159, 161–190, 230–259, 261–284, 322–355, 372–400, 425–455, 517–546, and 548–575; these read NNYLTSHVIKSTKYSLLDVNTVQMLLDYKDPDYEL, STCHLYIFYMTKNRFDICDYLIASNIKYIDS, FGNISLLNSTNLNNYQLIKYIIDNNEFFNC, YYYLMLGILRYTKFYDLVDYILELISKSNN, FDEKVLFDTVICNNFELTKYLVEKGFNYDF, TIINSNVKFDVLKYFIELGNYLTD, SRIIHFEFYLLDYLTNKLNIIELIDLDLLMKTSI, NPDEYMEFAIKHDICIAKKLMELGGNIPD, DSLENLLPKIINNCDSEIIMYIIKKLTDTTI, NSIELLFVVTLSENIELFKLLLEINCNDNN, and LSWAFVFSIGCFKLMKYIVDNYNIDIYQ.

In Acanthamoeba polyphaga mimivirus (APMV), this protein is Putative ankyrin repeat protein L766.